We begin with the raw amino-acid sequence, 327 residues long: tRNA pseudouridine synthase B (327 aa).

The active-site Nucleophile is Asp83.

The protein belongs to the pseudouridine synthase TruB family. Type 1 subfamily.

It carries out the reaction uridine(55) in tRNA = pseudouridine(55) in tRNA. Its function is as follows. Responsible for synthesis of pseudouridine from uracil-55 in the psi GC loop of transfer RNAs. The polypeptide is tRNA pseudouridine synthase B (Mesomycoplasma hyopneumoniae (strain 232) (Mycoplasma hyopneumoniae)).